The primary structure comprises 831 residues: MPSHSRSRDRYRGERDPSRRYREVYDDDDDDDFDYHPRERRRYRRDDYQHDIRSHESPNYNDDLNEYDAAAEDPAVPLRSHDVEGRRRERSRAGESPIASPSRRDRNRGGEEYRRHGTYGDGGSPTRAMRDRRHRSRDGQRARPRDMDREARRQRRRERARGAAAMKHKSSDSTNSGSHLLSADALAKLRSHYDEEDQRERSQEQEQPRLESKRQRKRPIVGDEPQALAPFPDETPRGQSKGRIVSGAYLEEGHPEMEVRHRGGGGPAMEARWRKEGNWDGTMEGSDAQPPFWKRKKWWIVIGVLVVVLAIVIPVAVVMSKKHGHDDDKSGSSSSVDNSDSPYISSLDGLSHDSIPESAQGSILDPWTWYDTRDFNLTFTNETVGGLPIMGLNSTWDDSTRPNDNVPPLNESFPYGSQPIRGVNLGGWLSIEPFIVPSLFENYSSKDRIIDEYTLCKKLGSSAASTIEKHYADFISEQDFIDMRDAGLDHVRIQFSYWAVTTYDDDPYVAKISWRYLLRAIEYCRKYGLRVNLDPHGIPGSQNGWNHSGREGVIGWLNGTDGQLNRQRSLDFHNQISQFFAQPRYKNVVTIYGLVNEPLMLSLPVEDVLNWTTDATKLVQKNGISAYVTVHDGFLNLSKWKQMLKDRPDRMFLDTHQYTIFNTGQIVLNHTDRVKLICNDWYNMIKEINTTSAGWGPTICGEWSQADTDCAQYLNNVGRGTRWEGTFAIGDSTVYCPTADTGPTCSCASANAPPADYSDGYKKFLQTYAEAQMSAFGTAQGWFYWTWHTESAAQWSYKTAWKNGYMPKKAYAPDFKCGDDIPSFGDLPEYY.

Basic and acidic residues-rich tracts occupy residues 1–24, 44–56, 79–93, 102–115, 137–151, and 198–213; these read MPSHSRSRDRYRGERDPSRRYREV, RRDDYQHDIRSHE, RSHDVEGRRRERSRA, SRRDRNRGGEEYRR, RDGQRARPRDMDREA, and QRERSQEQEQPRLESK. Disordered stretches follow at residues 1-179 and 192-241; these read MPSH…SGSH and HYDE…GQSK. Topologically, residues 1–297 are cytoplasmic; it reads MPSHSRSRDR…AQPPFWKRKK (297 aa). The chain crosses the membrane as a helical; Signal-anchor for type II membrane protein span at residues 298–318; the sequence is WWIVIGVLVVVLAIVIPVAVV. Topologically, residues 319 to 831 are extracellular; that stretch reads MSKKHGHDDD…PSFGDLPEYY (513 aa). Residues Asn-376, Asn-381, Asn-393, Asn-410, Asn-442, Asn-546, and Asn-558 are each glycosylated (N-linked (GlcNAc...) asparagine). The active-site Proton donor is the Glu-597. Residues Asn-610, Asn-636, Asn-669, and Asn-689 are each glycosylated (N-linked (GlcNAc...) asparagine). Residue Glu-702 is the Nucleophile of the active site.

This sequence belongs to the glycosyl hydrolase 5 (cellulase A) family.

The protein localises to the cell membrane. It catalyses the reaction Successive hydrolysis of beta-D-glucose units from the non-reducing ends of (1-&gt;3)-beta-D-glucans, releasing alpha-glucose.. In terms of biological role, glucosidase involved in the degradation of cellulosic biomass. Active on lichenan. The protein is Probable glucan 1,3-beta-glucosidase D (exgD) of Aspergillus flavus (strain ATCC 200026 / FGSC A1120 / IAM 13836 / NRRL 3357 / JCM 12722 / SRRC 167).